Here is a 306-residue protein sequence, read N- to C-terminus: Pantothenate kinase (306 aa).

Position 90 to 97 (90 to 97 (GSVAVGKS)) interacts with ATP.

Belongs to the prokaryotic pantothenate kinase family.

The protein resides in the cytoplasm. The enzyme catalyses (R)-pantothenate + ATP = (R)-4'-phosphopantothenate + ADP + H(+). The protein operates within cofactor biosynthesis; coenzyme A biosynthesis; CoA from (R)-pantothenate: step 1/5. This is Pantothenate kinase from Ligilactobacillus salivarius (strain UCC118) (Lactobacillus salivarius).